A 279-amino-acid chain; its full sequence is Large ribosomal subunit protein uL2 (279 aa).

2 disordered regions span residues 32 to 53 and 225 to 279; these read SLLR…TTRH and AMNP…KKRK. Residues 253–268 are compositionally biased toward basic and acidic residues; the sequence is KEGRTRHINKPSDKLI. Positions 269-279 are enriched in basic residues; it reads VRRRNAGKKRK.

The protein belongs to the universal ribosomal protein uL2 family. As to quaternary structure, part of the 50S ribosomal subunit. Forms a bridge to the 30S subunit in the 70S ribosome.

In terms of biological role, one of the primary rRNA binding proteins. Required for association of the 30S and 50S subunits to form the 70S ribosome, for tRNA binding and peptide bond formation. It has been suggested to have peptidyltransferase activity; this is somewhat controversial. Makes several contacts with the 16S rRNA in the 70S ribosome. The polypeptide is Large ribosomal subunit protein uL2 (Clavibacter michiganensis subsp. michiganensis (strain NCPPB 382)).